A 166-amino-acid chain; its full sequence is Large ribosomal subunit protein uL10 (166 aa).

This sequence belongs to the universal ribosomal protein uL10 family. Part of the ribosomal stalk of the 50S ribosomal subunit. The N-terminus interacts with L11 and the large rRNA to form the base of the stalk. The C-terminus forms an elongated spine to which L12 dimers bind in a sequential fashion forming a multimeric L10(L12)X complex.

Its function is as follows. Forms part of the ribosomal stalk, playing a central role in the interaction of the ribosome with GTP-bound translation factors. The chain is Large ribosomal subunit protein uL10 from Streptococcus gordonii (strain Challis / ATCC 35105 / BCRC 15272 / CH1 / DL1 / V288).